We begin with the raw amino-acid sequence, 552 residues long: Urocanate hydratase (552 aa).

NAD(+) contacts are provided by residues 49-50, Gln-127, 173-175, Asp-193, 239-240, 260-264, 270-271, and Tyr-319; these read GG, GMG, NA, QTSAH, and YV. Cys-407 is a catalytic residue. NAD(+) is bound at residue Gly-489.

It belongs to the urocanase family. The cofactor is NAD(+).

The protein resides in the cytoplasm. The catalysed reaction is 4-imidazolone-5-propanoate = trans-urocanate + H2O. Its pathway is amino-acid degradation; L-histidine degradation into L-glutamate; N-formimidoyl-L-glutamate from L-histidine: step 2/3. Its function is as follows. Catalyzes the conversion of urocanate to 4-imidazolone-5-propionate. The sequence is that of Urocanate hydratase from Bacillus cytotoxicus (strain DSM 22905 / CIP 110041 / 391-98 / NVH 391-98).